A 210-amino-acid chain; its full sequence is NAD(P)H-quinone oxidoreductase subunit I (210 aa).

2 4Fe-4S ferredoxin-type domains span residues 54–83 and 94–123; these read GRIH…VDWA and YSYS…VTED. Positions 63, 66, 69, 73, 103, 106, 109, and 113 each coordinate [4Fe-4S] cluster.

Belongs to the complex I 23 kDa subunit family. As to quaternary structure, NDH-1 is composed of at least 11 different subunits. Requires [4Fe-4S] cluster as cofactor.

Its subcellular location is the cellular thylakoid membrane. The catalysed reaction is a plastoquinone + NADH + (n+1) H(+)(in) = a plastoquinol + NAD(+) + n H(+)(out). The enzyme catalyses a plastoquinone + NADPH + (n+1) H(+)(in) = a plastoquinol + NADP(+) + n H(+)(out). Functionally, NDH-1 shuttles electrons from an unknown electron donor, via FMN and iron-sulfur (Fe-S) centers, to quinones in the respiratory and/or the photosynthetic chain. The immediate electron acceptor for the enzyme in this species is believed to be plastoquinone. Couples the redox reaction to proton translocation, and thus conserves the redox energy in a proton gradient. The protein is NAD(P)H-quinone oxidoreductase subunit I of Synechococcus sp. (strain JA-2-3B'a(2-13)) (Cyanobacteria bacterium Yellowstone B-Prime).